The sequence spans 348 residues: Phospho-2-dehydro-3-deoxyheptonate aldolase, Trp-sensitive (348 aa).

The protein belongs to the class-I DAHP synthase family.

It catalyses the reaction D-erythrose 4-phosphate + phosphoenolpyruvate + H2O = 7-phospho-2-dehydro-3-deoxy-D-arabino-heptonate + phosphate. It functions in the pathway metabolic intermediate biosynthesis; chorismate biosynthesis; chorismate from D-erythrose 4-phosphate and phosphoenolpyruvate: step 1/7. Its function is as follows. Stereospecific condensation of phosphoenolpyruvate (PEP) and D-erythrose-4-phosphate (E4P) giving rise to 3-deoxy-D-arabino-heptulosonate-7-phosphate (DAHP). This is Phospho-2-dehydro-3-deoxyheptonate aldolase, Trp-sensitive (aroH) from Escherichia coli (strain K12).